The following is a 919-amino-acid chain: Chitin synthase 1 (919 aa).

Disordered regions lie at residues 1–69 (MSYD…SFQT) and 109–134 (NLAS…ALGP). The segment covering 11-30 (GQGRDYARQQRQQRSYQLSD) has biased composition (low complexity). Residues Asn187 and Asn556 are each glycosylated (N-linked (GlcNAc...) asparagine). 7 helical membrane passes run 594 to 614 (IVLL…SIII), 630 to 650 (LVVF…FLVL), 668 to 688 (IASF…SLWL), 713 to 733 (VLIA…ILYA), 742 to 762 (FPQY…YAFC), 843 to 863 (LVAF…NVNG), and 887 to 919 (IILW…FRKT).

The protein belongs to the chitin synthase family. Class III subfamily.

Its subcellular location is the cell membrane. The protein resides in the cytoplasmic vesicle membrane. It carries out the reaction [(1-&gt;4)-N-acetyl-beta-D-glucosaminyl](n) + UDP-N-acetyl-alpha-D-glucosamine = [(1-&gt;4)-N-acetyl-beta-D-glucosaminyl](n+1) + UDP + H(+). Polymerizes chitin, a structural polymer of the cell wall and septum, by transferring the sugar moiety of UDP-GlcNAc to the non-reducing end of the growing chitin polymer. The protein is Chitin synthase 1 of Mycosarcoma maydis (Corn smut fungus).